The chain runs to 139 residues: Probable disulfide formation protein C (139 aa).

A helical transmembrane segment spans residues 8–27 (EYALLTAWGASFIATLGSLY). Cys-37 and Cys-40 form a disulfide bridge. 2 helical membrane passes run 42-61 (YQRI…VAKK) and 68-85 (YSLP…YHYA). Residues Cys-99 and Cys-104 are joined by a disulfide bond. A helical transmembrane segment spans residues 113-135 (GFVTIPFLALIGFITIAVCSFIV).

It belongs to the DsbB family. BdbC subfamily.

Its subcellular location is the cell membrane. Required for disulfide bond formation in some proteins. The protein is Probable disulfide formation protein C of Bacillus cereus (strain ATCC 14579 / DSM 31 / CCUG 7414 / JCM 2152 / NBRC 15305 / NCIMB 9373 / NCTC 2599 / NRRL B-3711).